The chain runs to 940 residues: MSDYKSTLNLPETEFPMRGNLANREPVMLKSWTEDGLYQQIRDSRIGRKPFILHDGPPYANGSIHIGHSVNKILKDIIVKSKTLSGFDAPYIPGWDCHGLPIELKVEQKVGKPGHKVTAAQFREKCREYAAKQVDGQREDFIRLGVFADWNKPYLTMDFDTEANIVRSLAKVIDSGHLHKGVKPVHWCTDCGSALAEAEVEYEDKKSPAIDVAFAATDKAALLAKFDVQDCTGSASMVIWTTTPWTLPANRALSVSPELDYVLVEFVKDGATSTVILADALVESCMERYGVESHKALGKAKGQELELLRFNHPFYDFDVPVILGDHVTVDSGTGVVHTAPGHGQDDFVVGQKYGLEVANPVGDNGVYKADTEIFAGQHVFKANDNVVALLEEKGALIKHEKIMHSYPHCWRHKTPIIFRATPQWFISMDQKGLRKQALGEIEQTQWIPDWGQSRIEKMVENRPDWCISRQRTWGVPITLFVHRETEELHPDSISLMERVANRIEREGIQAWWDLDAQELLGDEAEQYRKVTDTLDVWYDSGSSFSSVVASRPEYQGHEIDLYLEGSDQHRGWFMSSLMISTAMNGKAPYKQVLTHGFTVDGNGRKMSKSIGNVIAPQTVTNKLGADILRLWVAATDYSGEMTVSDEILKRSADAYRRIRNTARFLLANINGFDPVNDLVAVEEMVALDRWVVRRAAALQEELIEAYEQYNFHVVTQKLMQFCSVELGSFYLDIIKDRQYTAKGDSVARRSCQSALYLISEAMVRWIAPILSFTADEIWQLLPGEREKYVFTQEWYQGLESVTLDSDLSDEYWEQLLTVRGEVNKVIEQARREKQIGGSLEAEITLYADDALSQALATLGDELRFVLLTSKTQIVALSSAPADAIETEMTSLKLGLHKAESEKCERCWHHREDVGQVEAHPTLCTRCVTNIEGDGEVRQFA.

The 'HIGH' region motif lies at 58–68 (PYANGSIHIGH). Glu564 serves as a coordination point for L-isoleucyl-5'-AMP. Positions 605-609 (KMSKS) match the 'KMSKS' region motif. Lys608 lines the ATP pocket. Zn(2+) contacts are provided by Cys903, Cys906, Cys923, and Cys926.

It belongs to the class-I aminoacyl-tRNA synthetase family. IleS type 1 subfamily. As to quaternary structure, monomer. The cofactor is Zn(2+).

It localises to the cytoplasm. The enzyme catalyses tRNA(Ile) + L-isoleucine + ATP = L-isoleucyl-tRNA(Ile) + AMP + diphosphate. Functionally, catalyzes the attachment of isoleucine to tRNA(Ile). As IleRS can inadvertently accommodate and process structurally similar amino acids such as valine, to avoid such errors it has two additional distinct tRNA(Ile)-dependent editing activities. One activity is designated as 'pretransfer' editing and involves the hydrolysis of activated Val-AMP. The other activity is designated 'posttransfer' editing and involves deacylation of mischarged Val-tRNA(Ile). The polypeptide is Isoleucine--tRNA ligase (Shewanella sediminis (strain HAW-EB3)).